A 636-amino-acid chain; its full sequence is 1-deoxy-D-xylulose-5-phosphate synthase 2 (636 aa).

Residues His78 and Ala119–Ser121 each bind thiamine diphosphate. Asp150 lines the Mg(2+) pocket. Thiamine diphosphate-binding positions include Gly151–Ser152, Asn179, Tyr288, and Glu370. Asn179 lines the Mg(2+) pocket.

It belongs to the transketolase family. DXPS subfamily. As to quaternary structure, homodimer. The cofactor is Mg(2+). It depends on thiamine diphosphate as a cofactor.

It catalyses the reaction D-glyceraldehyde 3-phosphate + pyruvate + H(+) = 1-deoxy-D-xylulose 5-phosphate + CO2. It participates in metabolic intermediate biosynthesis; 1-deoxy-D-xylulose 5-phosphate biosynthesis; 1-deoxy-D-xylulose 5-phosphate from D-glyceraldehyde 3-phosphate and pyruvate: step 1/1. In terms of biological role, catalyzes the acyloin condensation reaction between C atoms 2 and 3 of pyruvate and glyceraldehyde 3-phosphate to yield 1-deoxy-D-xylulose-5-phosphate (DXP). The chain is 1-deoxy-D-xylulose-5-phosphate synthase 2 from Jannaschia sp. (strain CCS1).